We begin with the raw amino-acid sequence, 264 residues long: Thymidylate synthase (264 aa).

Arg-21 provides a ligand contact to dUMP. His-51 contacts (6R)-5,10-methylene-5,6,7,8-tetrahydrofolate. 126–127 (RR) contacts dUMP. Cys-146 functions as the Nucleophile in the catalytic mechanism. DUMP contacts are provided by residues 166–169 (RSCD), Asn-177, and 207–209 (HLY). A (6R)-5,10-methylene-5,6,7,8-tetrahydrofolate-binding site is contributed by Asp-169. Residue Ser-263 coordinates (6R)-5,10-methylene-5,6,7,8-tetrahydrofolate.

This sequence belongs to the thymidylate synthase family. Bacterial-type ThyA subfamily. Homodimer.

Its subcellular location is the cytoplasm. The catalysed reaction is dUMP + (6R)-5,10-methylene-5,6,7,8-tetrahydrofolate = 7,8-dihydrofolate + dTMP. Its pathway is pyrimidine metabolism; dTTP biosynthesis. Catalyzes the reductive methylation of 2'-deoxyuridine-5'-monophosphate (dUMP) to 2'-deoxythymidine-5'-monophosphate (dTMP) while utilizing 5,10-methylenetetrahydrofolate (mTHF) as the methyl donor and reductant in the reaction, yielding dihydrofolate (DHF) as a by-product. This enzymatic reaction provides an intracellular de novo source of dTMP, an essential precursor for DNA biosynthesis. This chain is Thymidylate synthase, found in Buchnera aphidicola subsp. Schizaphis graminum (strain Sg).